A 1160-amino-acid chain; its full sequence is Protein GIGANTEA (1160 aa).

Residues 158 to 169 (CSSTSDQASSCE) are compositionally biased toward polar residues. Disordered regions lie at residues 158–188 (CSSTSDQASSCESMEKRANGSPRNEPDRKPL), 600–629 (GGSKRPTGSDNHSSEEVTNDSRLTNGRNRC), and 800–830 (PVKKDEPPIEEKNINSSDGGALEKKDASRSH). Positions 170 to 187 (SMEKRANGSPRNEPDRKP) are enriched in basic and acidic residues. The segment covering 801–812 (VKKDEPPIEEKN) has biased composition (basic and acidic residues).

This sequence belongs to the GIGANTEA family.

The protein localises to the nucleus. Involved in regulation of circadian rhythm, and in the control of the photoperiodic flowering. Acts as a suppressor of flowering under short-day (SD) and long-day (LD) conditions. Activates Hd1/CONSTANS gene. This is Protein GIGANTEA (GI) from Oryza sativa subsp. japonica (Rice).